The primary structure comprises 1071 residues: ATP-dependent helicase/deoxyribonuclease subunit B (1071 aa).

The protein belongs to the helicase family. AddB/RexB type 2 subfamily. As to quaternary structure, heterodimer of AddA and RexB. The cofactor is Mg(2+).

The heterodimer acts as both an ATP-dependent DNA helicase and an ATP-dependent, dual-direction single-stranded exonuclease. Recognizes the chi site generating a DNA molecule suitable for the initiation of homologous recombination. This subunit has 5' -&gt; 3' nuclease activity but not helicase activity. The sequence is that of ATP-dependent helicase/deoxyribonuclease subunit B from Streptococcus pyogenes serotype M28 (strain MGAS6180).